Reading from the N-terminus, the 165-residue chain is Acireductone dioxygenase (165 aa).

Fe(2+)-binding residues include His-90, His-92, Glu-96, and His-134. Ni(2+) contacts are provided by His-90, His-92, Glu-96, and His-134.

The protein belongs to the acireductone dioxygenase (ARD) family. In terms of assembly, monomer. Fe(2+) serves as cofactor. The cofactor is Ni(2+).

The catalysed reaction is 1,2-dihydroxy-5-(methylsulfanyl)pent-1-en-3-one + O2 = 3-(methylsulfanyl)propanoate + CO + formate + 2 H(+). The enzyme catalyses 1,2-dihydroxy-5-(methylsulfanyl)pent-1-en-3-one + O2 = 4-methylsulfanyl-2-oxobutanoate + formate + 2 H(+). It functions in the pathway amino-acid biosynthesis; L-methionine biosynthesis via salvage pathway; L-methionine from S-methyl-5-thio-alpha-D-ribose 1-phosphate: step 5/6. In terms of biological role, catalyzes 2 different reactions between oxygen and the acireductone 1,2-dihydroxy-3-keto-5-methylthiopentene (DHK-MTPene) depending upon the metal bound in the active site. Fe-containing acireductone dioxygenase (Fe-ARD) produces formate and 2-keto-4-methylthiobutyrate (KMTB), the alpha-ketoacid precursor of methionine in the methionine recycle pathway. Ni-containing acireductone dioxygenase (Ni-ARD) produces methylthiopropionate, carbon monoxide and formate, and does not lie on the methionine recycle pathway. In Rhodopseudomonas palustris (strain ATCC BAA-98 / CGA009), this protein is Acireductone dioxygenase.